The following is a 161-amino-acid chain: Nucleotide-binding protein PputGB1_4497 (161 aa).

The protein belongs to the YajQ family.

Functionally, nucleotide-binding protein. In Pseudomonas putida (strain GB-1), this protein is Nucleotide-binding protein PputGB1_4497.